We begin with the raw amino-acid sequence, 344 residues long: TATA box-binding protein-like 2 (344 aa).

Positions 78–143 (NKDRTVTGNK…SNQLSSETPN (66 aa)) are disordered. The span at 110–120 (GSGLNLNSNSS) shows a compositional bias: low complexity. Residues 134–143 (SNQLSSETPN) are compositionally biased toward polar residues.

This sequence belongs to the TBP family. Interacts with TAF3.

Its subcellular location is the cytoplasm. It is found in the nucleus. Functionally, transcription factor required in complex with TAF3 for the differentiation of myoblasts into myocytes. The complex replaces TFIID at specific promoters at an early stage in the differentiation process. The chain is TATA box-binding protein-like 2 from Rattus norvegicus (Rat).